The primary structure comprises 486 residues: NADH dehydrogenase [ubiquinone] flavoprotein 1, mitochondrial (486 aa).

The transit peptide at 1–30 (MAPVRGILGLQRAVSIWKESNRLTPALRSF) directs the protein to the mitochondrion. Over residues 31 to 40 (STQAASTSTT) the composition is skewed to low complexity. Residues 31–57 (STQAASTSTTPQPPPPPPPPEKTHFGG) are disordered. Residues 41–50 (PQPPPPPPPP) show a composition bias toward pro residues. Position 110 to 119 (110 to 119 (GRGGAGFPSG)) interacts with NADH. Position 222–270 (222–270 (FGAGAYICGEETALLESLEGKQGKPRLKPPFPANAGLYGCPTTVTNVET)) interacts with FMN. [4Fe-4S] cluster is bound by residues Cys-402, Cys-405, Cys-408, and Cys-448.

Belongs to the complex I 51 kDa subunit family. As to quaternary structure, complex I is composed of at least 49 different subunits. This is a component of the flavoprotein-sulfur (FP) fragment of the enzyme. FMN serves as cofactor. The cofactor is [4Fe-4S] cluster.

The protein localises to the mitochondrion inner membrane. It catalyses the reaction a ubiquinone + NADH + 5 H(+)(in) = a ubiquinol + NAD(+) + 4 H(+)(out). Functionally, core subunit of the mitochondrial membrane respiratory chain NADH dehydrogenase (Complex I) that is believed to belong to the minimal assembly required for catalysis. Complex I functions in the transfer of electrons from NADH to the respiratory chain. The immediate electron acceptor for the enzyme is believed to be ubiquinone. This chain is NADH dehydrogenase [ubiquinone] flavoprotein 1, mitochondrial, found in Arabidopsis thaliana (Mouse-ear cress).